The chain runs to 371 residues: O-antigen chain mannosyltransferase C (371 aa).

Belongs to the glycosyltransferase group 1 family. Glycosyltransferase 4 subfamily.

The catalysed reaction is N-acetyl-alpha-D-glucosaminyl-di-trans,octa-cis-undecaprenyl diphosphate + GDP-alpha-D-mannose = alpha-D-mannosyl-(1-&gt;3)-N-acetyl-alpha-D-glucosaminyl-di-trans,octa-cis-undecaprenyl diphosphate + GDP + H(+). It participates in bacterial outer membrane biogenesis; LPS O-antigen biosynthesis. Mannosyltransferase involved in the biosynthesis of the repeat unit of the lipopolysaccharide (LPS) O-antigen region. Catalyzes the transfer of a single alpha-(1-&gt;3)-linked mannose residue to the acceptor N-acetyl-glucosaminyl-diphospho-undecaprenol during the synthesis of the adapter region. In Escherichia coli, this protein is O-antigen chain mannosyltransferase C.